Here is a 226-residue protein sequence, read N- to C-terminus: Biosynthetic peptidoglycan transglycosylase (226 aa).

Residues 10–30 (IIMTLLALLILPYLLIPVYAL) form a helical membrane-spanning segment.

It belongs to the glycosyltransferase 51 family.

The protein resides in the cell inner membrane. The catalysed reaction is [GlcNAc-(1-&gt;4)-Mur2Ac(oyl-L-Ala-gamma-D-Glu-L-Lys-D-Ala-D-Ala)](n)-di-trans,octa-cis-undecaprenyl diphosphate + beta-D-GlcNAc-(1-&gt;4)-Mur2Ac(oyl-L-Ala-gamma-D-Glu-L-Lys-D-Ala-D-Ala)-di-trans,octa-cis-undecaprenyl diphosphate = [GlcNAc-(1-&gt;4)-Mur2Ac(oyl-L-Ala-gamma-D-Glu-L-Lys-D-Ala-D-Ala)](n+1)-di-trans,octa-cis-undecaprenyl diphosphate + di-trans,octa-cis-undecaprenyl diphosphate + H(+). It functions in the pathway cell wall biogenesis; peptidoglycan biosynthesis. In terms of biological role, peptidoglycan polymerase that catalyzes glycan chain elongation from lipid-linked precursors. The protein is Biosynthetic peptidoglycan transglycosylase of Agrobacterium fabrum (strain C58 / ATCC 33970) (Agrobacterium tumefaciens (strain C58)).